Reading from the N-terminus, the 206-residue chain is Imidazoleglycerol-phosphate dehydratase (206 aa).

The protein belongs to the imidazoleglycerol-phosphate dehydratase family.

Its subcellular location is the cytoplasm. It catalyses the reaction D-erythro-1-(imidazol-4-yl)glycerol 3-phosphate = 3-(imidazol-4-yl)-2-oxopropyl phosphate + H2O. The protein operates within amino-acid biosynthesis; L-histidine biosynthesis; L-histidine from 5-phospho-alpha-D-ribose 1-diphosphate: step 6/9. The sequence is that of Imidazoleglycerol-phosphate dehydratase from Leptospira borgpetersenii serovar Hardjo-bovis (strain JB197).